The sequence spans 227 residues: Cytochrome c oxidase subunit 2 (227 aa).

Residues 1 to 14 are Mitochondrial intermembrane-facing; that stretch reads MAYPFELGFQDATS. The helical transmembrane segment at 15 to 45 threads the bilayer; the sequence is PIMEELLHFHDHTLMIVFLISSLVLYIISLM. Residues 46–59 lie on the Mitochondrial matrix side of the membrane; that stretch reads LTTKLTHTSTMDAQ. The helical transmembrane segment at 60–87 threads the bilayer; sequence EVETIWTILPAIILILIALPSLRILYMM. The Mitochondrial intermembrane segment spans residues 88–227; it reads DEINDPSLTV…HFENWSSSML (140 aa). Residues H161, C196, E198, C200, H204, and M207 each coordinate Cu cation. E198 is a Mg(2+) binding site.

It belongs to the cytochrome c oxidase subunit 2 family. In terms of assembly, component of the cytochrome c oxidase (complex IV, CIV), a multisubunit enzyme composed of 14 subunits. The complex is composed of a catalytic core of 3 subunits MT-CO1, MT-CO2 and MT-CO3, encoded in the mitochondrial DNA, and 11 supernumerary subunits COX4I, COX5A, COX5B, COX6A, COX6B, COX6C, COX7A, COX7B, COX7C, COX8 and NDUFA4, which are encoded in the nuclear genome. The complex exists as a monomer or a dimer and forms supercomplexes (SCs) in the inner mitochondrial membrane with NADH-ubiquinone oxidoreductase (complex I, CI) and ubiquinol-cytochrome c oxidoreductase (cytochrome b-c1 complex, complex III, CIII), resulting in different assemblies (supercomplex SCI(1)III(2)IV(1) and megacomplex MCI(2)III(2)IV(2)). Found in a complex with TMEM177, COA6, COX18, COX20, SCO1 and SCO2. Interacts with TMEM177 in a COX20-dependent manner. Interacts with COX20. Interacts with COX16. Cu cation is required as a cofactor.

It is found in the mitochondrion inner membrane. The enzyme catalyses 4 Fe(II)-[cytochrome c] + O2 + 8 H(+)(in) = 4 Fe(III)-[cytochrome c] + 2 H2O + 4 H(+)(out). Functionally, component of the cytochrome c oxidase, the last enzyme in the mitochondrial electron transport chain which drives oxidative phosphorylation. The respiratory chain contains 3 multisubunit complexes succinate dehydrogenase (complex II, CII), ubiquinol-cytochrome c oxidoreductase (cytochrome b-c1 complex, complex III, CIII) and cytochrome c oxidase (complex IV, CIV), that cooperate to transfer electrons derived from NADH and succinate to molecular oxygen, creating an electrochemical gradient over the inner membrane that drives transmembrane transport and the ATP synthase. Cytochrome c oxidase is the component of the respiratory chain that catalyzes the reduction of oxygen to water. Electrons originating from reduced cytochrome c in the intermembrane space (IMS) are transferred via the dinuclear copper A center (CU(A)) of subunit 2 and heme A of subunit 1 to the active site in subunit 1, a binuclear center (BNC) formed by heme A3 and copper B (CU(B)). The BNC reduces molecular oxygen to 2 water molecules using 4 electrons from cytochrome c in the IMS and 4 protons from the mitochondrial matrix. The protein is Cytochrome c oxidase subunit 2 (MT-CO2) of Tamias merriami (Merriam's chipmunk).